Here is a 97-residue protein sequence, read N- to C-terminus: MALTKAEVAEHLFEKVGLSKRDAKDMVEIFFEEIRETLESGDQVKLSGFGNFDLRLKSERPGRNPKTGEDIPISARKVVTFRPGQKLKSRVEDGNSD.

This sequence belongs to the bacterial histone-like protein family. In terms of assembly, heterodimer of an alpha and a beta chain.

In terms of biological role, this protein is one of the two subunits of integration host factor, a specific DNA-binding protein that functions in genetic recombination as well as in transcriptional and translational control. This chain is Integration host factor subunit alpha, found in Colwellia psychrerythraea (strain 34H / ATCC BAA-681) (Vibrio psychroerythus).